A 195-amino-acid polypeptide reads, in one-letter code: Imidazoleglycerol-phosphate dehydratase (195 aa).

It belongs to the imidazoleglycerol-phosphate dehydratase family.

Its subcellular location is the cytoplasm. It catalyses the reaction D-erythro-1-(imidazol-4-yl)glycerol 3-phosphate = 3-(imidazol-4-yl)-2-oxopropyl phosphate + H2O. It participates in amino-acid biosynthesis; L-histidine biosynthesis; L-histidine from 5-phospho-alpha-D-ribose 1-diphosphate: step 6/9. In Geobacillus thermodenitrificans (strain NG80-2), this protein is Imidazoleglycerol-phosphate dehydratase.